The sequence spans 182 residues: Adenine phosphoribosyltransferase (182 aa).

It belongs to the purine/pyrimidine phosphoribosyltransferase family. Homodimer.

The protein resides in the cytoplasm. The catalysed reaction is AMP + diphosphate = 5-phospho-alpha-D-ribose 1-diphosphate + adenine. The protein operates within purine metabolism; AMP biosynthesis via salvage pathway; AMP from adenine: step 1/1. Catalyzes a salvage reaction resulting in the formation of AMP, that is energically less costly than de novo synthesis. The sequence is that of Adenine phosphoribosyltransferase from Pseudomonas fluorescens (strain SBW25).